The following is a 265-amino-acid chain: Phosphonoacetaldehyde hydrolase (265 aa).

D10 (nucleophile) is an active-site residue. Residues D10 and A12 each contribute to the Mg(2+) site. K51 functions as the Schiff-base intermediate with substrate in the catalytic mechanism. D184 contributes to the Mg(2+) binding site.

Belongs to the HAD-like hydrolase superfamily. PhnX family. Homodimer. It depends on Mg(2+) as a cofactor.

The enzyme catalyses phosphonoacetaldehyde + H2O = acetaldehyde + phosphate + H(+). In terms of biological role, involved in phosphonate degradation. This Latilactobacillus sakei subsp. sakei (strain 23K) (Lactobacillus sakei subsp. sakei) protein is Phosphonoacetaldehyde hydrolase.